The following is a 709-amino-acid chain: Elongation factor G (709 aa).

The 284-residue stretch at 9-292 folds into the tr-type G domain; that stretch reads AYYRNIGISA…AVVEYLPSPT (284 aa). GTP-binding positions include 18–25, 89–93, and 143–146; these read AHIDAGKT, DTPGH, and NKMD.

It belongs to the TRAFAC class translation factor GTPase superfamily. Classic translation factor GTPase family. EF-G/EF-2 subfamily.

The protein resides in the cytoplasm. In terms of biological role, catalyzes the GTP-dependent ribosomal translocation step during translation elongation. During this step, the ribosome changes from the pre-translocational (PRE) to the post-translocational (POST) state as the newly formed A-site-bound peptidyl-tRNA and P-site-bound deacylated tRNA move to the P and E sites, respectively. Catalyzes the coordinated movement of the two tRNA molecules, the mRNA and conformational changes in the ribosome. This is Elongation factor G from Blochmanniella floridana.